Consider the following 616-residue polypeptide: Chaperone protein HscA (616 aa).

This sequence belongs to the heat shock protein 70 family.

In terms of biological role, chaperone involved in the maturation of iron-sulfur cluster-containing proteins. Has a low intrinsic ATPase activity which is markedly stimulated by HscB. Involved in the maturation of IscU. The protein is Chaperone protein HscA of Salmonella newport (strain SL254).